Reading from the N-terminus, the 262-residue chain is Thiazole synthase (262 aa).

Catalysis depends on Lys97, which acts as the Schiff-base intermediate with DXP. Residues Gly158, Ala185 to Gly186, and Asn207 to Thr208 each bind 1-deoxy-D-xylulose 5-phosphate. The tract at residues Asp243–Tyr262 is disordered.

The protein belongs to the ThiG family. Homotetramer. Forms heterodimers with either ThiH or ThiS.

It localises to the cytoplasm. The enzyme catalyses [ThiS sulfur-carrier protein]-C-terminal-Gly-aminoethanethioate + 2-iminoacetate + 1-deoxy-D-xylulose 5-phosphate = [ThiS sulfur-carrier protein]-C-terminal Gly-Gly + 2-[(2R,5Z)-2-carboxy-4-methylthiazol-5(2H)-ylidene]ethyl phosphate + 2 H2O + H(+). It functions in the pathway cofactor biosynthesis; thiamine diphosphate biosynthesis. Its function is as follows. Catalyzes the rearrangement of 1-deoxy-D-xylulose 5-phosphate (DXP) to produce the thiazole phosphate moiety of thiamine. Sulfur is provided by the thiocarboxylate moiety of the carrier protein ThiS. In vitro, sulfur can be provided by H(2)S. The chain is Thiazole synthase from Neisseria meningitidis serogroup C (strain 053442).